We begin with the raw amino-acid sequence, 506 residues long: Protein CYCLOPS (506 aa).

Disordered stretches follow at residues 193-223 (TVNS…LDNP) and 385-434 (KENL…RSST). The span at 202 to 219 (TPSQTPTFVSPSSSSTSP) shows a compositional bias: low complexity. Over residues 385-394 (KENLKDDRKK) the composition is skewed to basic and acidic residues. The Nuclear localization signal signature appears at 415-418 (KKRR). Residues 422–432 (SRKMAEAKERS) are compositionally biased toward basic and acidic residues. Positions 441 to 506 (IQVVLKRCET…IERIVSDTNT (66 aa)) form a coiled coil.

This sequence belongs to the CYCLOPS family. Highly epressed in roots. Expressed at very low levels in leaves, stems and panicles.

Its subcellular location is the nucleus. Involved in arbuscular mycorrhizal (AM) symbiosis. Required for fungal infection in roots and arbuscule development during AM symbiosis. The chain is Protein CYCLOPS from Oryza sativa subsp. japonica (Rice).